A 65-amino-acid chain; its full sequence is Crotamine CRO1 (65 aa).

Positions 1–22 are cleaved as a signal peptide; the sequence is MKILYLLFAFLFLAFLSEPGNA. Disulfide bonds link Cys26/Cys58, Cys33/Cys52, and Cys40/Cys59.

This sequence belongs to the crotamine-myotoxin family. As to quaternary structure, monomer. Expressed by the venom gland.

The protein resides in the secreted. Cationic peptide that possesses multiple functions. It acts as a cell-penetrating peptide (CPP), and as a potent voltage-gated potassium channel (Kv) inhibitor. It exhibits antimicrobial activities, hind limb paralysis, and severe muscle necrosis by a non-enzymatic mechanism. This is Crotamine CRO1 (CRO1) from Crotalus durissus terrificus (South American rattlesnake).